A 353-amino-acid chain; its full sequence is Phosphate acyltransferase (353 aa).

The protein belongs to the PlsX family. As to quaternary structure, homodimer. Probably interacts with PlsY.

The protein localises to the cytoplasm. It carries out the reaction a fatty acyl-[ACP] + phosphate = an acyl phosphate + holo-[ACP]. It participates in lipid metabolism; phospholipid metabolism. Catalyzes the reversible formation of acyl-phosphate (acyl-PO(4)) from acyl-[acyl-carrier-protein] (acyl-ACP). This enzyme utilizes acyl-ACP as fatty acyl donor, but not acyl-CoA. The protein is Phosphate acyltransferase of Rhodopseudomonas palustris (strain BisB5).